Consider the following 378-residue polypeptide: MVKSPGTEDYTRRSLLANGLGLTPPMGWNSWNHFRCNLDEKLIRETADAMVSKGLAALGYKYINLDDCWAELNRDSQGNLVPKGSTFPSGIKALADYVHSKGLKLGIYSDAGTQTCSKTMPGSLGHEEQDAKTFASWGVDYLKYDNCNNNNISPKERYPIMSKALLNSGRSIFFSLCEWGEEDPATWAKEVGNSWRTTGDIDDSWSSMTSRADMNDKWASYAGPGGWNDPDMLEVGNGGMTTTEYRSHFSIWALAKAPLLIGCDIRSMDGATFQLLSNAEVIAVNQDKLGVQGNKVKTYGDLEVWAGPLSGKRVAVALWNRGSSTATITAYWSDVGLPSTAVVNARDLWAHSTEKSVKGQISAAVDAHDSKMYVLTPQ.

The signal sequence occupies residues 1–15 (MVKSPGTEDYTRRSL). Cystine bridges form between cysteine 36–cysteine 68 and cysteine 116–cysteine 147. Aspartate 145 (nucleophile) is an active-site residue. Position 178 to 182 (178 to 182 (EWGEE)) interacts with substrate. The active-site Proton donor is the aspartate 200.

The protein belongs to the glycosyl hydrolase 27 family.

The enzyme catalyses Hydrolysis of terminal, non-reducing alpha-D-galactose residues in alpha-D-galactosides, including galactose oligosaccharides, galactomannans and galactolipids.. Preferentially cleaves alpha-1,3 and alpha-1,4 glycoside linkages. Involved in the hydrolysis of the galactomannan, it splits alpha-linked galactose moieties. It is particularly suitable for the hydrolysis of guar gum to a gum with improved gelling properties. Can cleave terminal alpha-1,3-linked galactose residues responsible for blood group B specificity from the surface of erythrocytes thereby converting these cells serologically to group O. In Coffea arabica (Arabian coffee), this protein is Alpha-galactosidase.